Reading from the N-terminus, the 343-residue chain is Pentatricopeptide repeat-containing protein At1g06270 (343 aa).

PPR repeat units lie at residues 98-133, 134-169, 170-204, 205-240, 241-275, and 276-310; these read PKIV…GCLP, NPQT…GYSP, DTGT…GCIP, DVES…GISP, RKGM…DYPV, and EFES…GFIP.

Belongs to the PPR family. P subfamily.

The sequence is that of Pentatricopeptide repeat-containing protein At1g06270 from Arabidopsis thaliana (Mouse-ear cress).